Reading from the N-terminus, the 400-residue chain is Trans-enoyl reductase ucsL (400 aa).

NADP(+) is bound at residue 50–53 (TDHK). 145–152 (SVHGSVAL) is a substrate binding site. Residues 204 to 207 (STAC), 227 to 230 (SPRN), Y245, and 292 to 293 (LE) contribute to the NADP(+) site. Residue 313 to 317 (GPVMF) coordinates substrate. Residue 389–390 (VS) participates in NADP(+) binding.

Belongs to the zinc-containing alcohol dehydrogenase family. In terms of assembly, monomer.

It functions in the pathway mycotoxin biosynthesis. Functionally, trans-enoyl reductase; part of the gene cluster that mediates the biosynthesis of UCS1025A, a member of the pyrrolizidinone family that acts as a strong telomerase inhibitor and displays potent antibacterial and antitumor properties. These compounds share a hemiaminal-containing pyrrolizidinone core fused with a gamma-lactone, giving a furopyrrolizidine that is connected to a decalin fragment. The polyketide synthase module (PKS) of the PKS-NRPS ucsA is responsible for the synthesis of the polyketide backbone via the condensation of an acetyl-CoA starter unit with 6 malonyl-CoA units. The downstream nonribosomal peptide synthetase (NRPS) module then amidates the carboxyl end of the polyketide with a 2S,3S-methylproline derived from L-isoleucine by the 2-oxoglutarate-dependent dioxygenase ucsF which converts L-isoleucine to (4S,5S)-4-methylpyrroline-5-carboxylate that is further converted to 2S,3S-methylproline by the pyrroline-5-carboxylate reductase ucsG. Reductive release of the completed aminoacyl polyketide from the assembly line can form the 3-pyrrolin-2-one structure via an intramolecular Knoevenagel reaction. Because ucsA lacks a designated enoylreductase (ER) domain, the required activity is provided the enoyl reductase ucsL. This keto acyclic precursor is the substrate of the Diels-Alderase ucsH, that catalyzes the Diels-Alder cycloaddition. Oxidation of the 3S-methyl group to a carboxylate by the cytochrome P450 monooxygenase ucsK allows an oxa-Michael cyclization that might involve the reductase/dehydrogenase ucsI and which furnishes the furopyrrolizidine. The oxidase ucsJ likely plays a critical role in stereoselective reduction of the C5-C6 double bond to afford the required R-configured carboxylate group. Further enolization and oxidation at C5 by an unidentified enzyme affords the last intermediate that can undergo oxa-Michael cyclization to yield UCS1025A. This is Trans-enoyl reductase ucsL from Acremonium sp.